We begin with the raw amino-acid sequence, 914 residues long: Chlorate reductase subunit alpha (914 aa).

The tat-type signal signal peptide spans 1–32; the sequence is MNSPDEHNGRRRFLQFSAAALASAAASPSLWA. Residues 62–125 form the 4Fe-4S Mo/W bis-MGD-type domain; the sequence is DSVGVMTHSN…VYCSWSKQPD (64 aa). [4Fe-4S] cluster contacts are provided by His-69, Cys-73, Cys-77, and Cys-111. Mo-bis(molybdopterin guanine dinucleotide) is bound at residue Asp-205.

Belongs to the prokaryotic molybdopterin-containing oxidoreductase family. As to quaternary structure, heterotrimer of alpha, beta and gamma subunits. Requires [4Fe-4S] cluster as cofactor. It depends on Mo-bis(molybdopterin guanine dinucleotide) as a cofactor. Post-translationally, predicted to be exported by the Tat system. The position of the signal peptide cleavage has not been experimentally proven.

The protein localises to the periplasm. It carries out the reaction chlorate + AH2 = chlorite + A + H2O. Its function is as follows. Terminal reductase that allows anaerobic growth on chlorate as the sole respiratory oxidant. This is Chlorate reductase subunit alpha (clrA) from Ideonella dechloratans.